An 892-amino-acid polypeptide reads, in one-letter code: Translation initiation factor IF-2 (892 aa).

Positions 88–304 are disordered; that stretch reads KKRTFVKRDP…SSLQQGFQKP (217 aa). 2 stretches are compositionally biased toward basic and acidic residues: residues 93–159 and 166–216; these read VKRD…KDKV and DMTK…EENK. Basic residues predominate over residues 254-269; the sequence is GRGRNAKAARPAKKGK. Residues 270–282 show a composition bias toward basic and acidic residues; the sequence is HAESKADREEARA. The tr-type G domain maps to 391–560; it reads PRAPVVTIMG…LLQAEVLELK (170 aa). Residues 400-407 are G1; the sequence is GHVDHGKT. Residue 400–407 participates in GTP binding; that stretch reads GHVDHGKT. Positions 425–429 are G2; the sequence is GITQH. The tract at residues 446-449 is G3; the sequence is DTPG. GTP contacts are provided by residues 446–450 and 500–503; these read DTPGH and NKID. The G4 stretch occupies residues 500 to 503; that stretch reads NKID. The segment at 536–538 is G5; sequence SAK.

The protein belongs to the TRAFAC class translation factor GTPase superfamily. Classic translation factor GTPase family. IF-2 subfamily.

It is found in the cytoplasm. Its function is as follows. One of the essential components for the initiation of protein synthesis. Protects formylmethionyl-tRNA from spontaneous hydrolysis and promotes its binding to the 30S ribosomal subunits. Also involved in the hydrolysis of GTP during the formation of the 70S ribosomal complex. The protein is Translation initiation factor IF-2 of Salmonella choleraesuis (strain SC-B67).